The chain runs to 634 residues: Probable LRR receptor-like serine/threonine-protein kinase At2g23950 (634 aa).

The N-terminal stretch at 1 to 27 is a signal peptide; sequence MVVMKLITMKIFSVLLLLCFFVTCSLS. The Extracellular segment spans residues 28–236; sequence SEPRNPEVEA…SSGRRTNILA (209 aa). 2 N-linked (GlcNAc...) asparagine glycosylation sites follow: Asn96 and Asn109. LRR repeat units lie at residues 99–121, 123–145, 147–167, and 171–193; these read NLRQVSLQNNNISGKIPPEICSL, KLQTLDLSNNRFSGEIPGSVNQL, NLQYLRLNNNSLSGPFPASLS, and HLSFLDLSYNNLRGPVPKFPART. Residue Asn155 is glycosylated (N-linked (GlcNAc...) asparagine). The chain crosses the membrane as a helical span at residues 237-257; sequence VALGVSLGFAVSVILSLGFIW. At 258–634 the chain is on the cytoplasmic side; it reads YRKKQRRLTM…SFAMELSGPR (377 aa). A Phosphothreonine modification is found at Thr296. The Protein kinase domain occupies 299-554; that stretch reads FSSKSILGAG…QVALLCTQFL (256 aa). 305-313 contacts ATP; it reads LGAGGFGNV. Thr322 carries the phosphothreonine modification. Lys327 contributes to the ATP binding site. Residues Ser380 and Ser383 each carry the phosphoserine modification. The residue at position 395 (Thr395) is a Phosphothreonine. Residue Asp422 is the Proton acceptor of the active site. A phosphothreonine mark is found at Thr455, Thr456, and Thr461. The residue at position 469 (Tyr469) is a Phosphotyrosine. Ser471 carries the phosphoserine modification. Thr472 carries the post-translational modification Phosphothreonine. At Ser476 the chain carries Phosphoserine. At Thr551 the chain carries Phosphothreonine.

It belongs to the protein kinase superfamily. Ser/Thr protein kinase family.

The protein resides in the membrane. It catalyses the reaction L-seryl-[protein] + ATP = O-phospho-L-seryl-[protein] + ADP + H(+). The enzyme catalyses L-threonyl-[protein] + ATP = O-phospho-L-threonyl-[protein] + ADP + H(+). The protein is Probable LRR receptor-like serine/threonine-protein kinase At2g23950 of Arabidopsis thaliana (Mouse-ear cress).